The following is a 322-amino-acid chain: Short chain dehydrogenase AOL_s00215g274 (322 aa).

NAD(+)-binding positions include 47-48 (AV), 104-106 (IAV), 197-201 (YNVSK), and 230-232 (VAT). Catalysis depends on Y197, which acts as the Proton acceptor.

Belongs to the short-chain dehydrogenases/reductases (SDR) family.

It participates in secondary metabolite biosynthesis; terpenoid biosynthesis. In terms of biological role, short chain dehydrogenase; part of the gene cluster that mediates the biosynthesis of sesquiterpenyl epoxy-cyclohexenoids (SECs) such as anthrobotrisins and arthrosporols, metabolites that possess a novel hybrid carbon skeleton consisting of a polyketide-derived epoxycyclohexenol combined with a terpenoid-derived monocyclic sesquiterpenol substructure (PKS-PTS hybrid). The SEC pathway plays an important role for fungal soil colonization via decreasing fungal nematode-capturing ability. Within the pathway, the cytochrome P450 monooxygenase AOL_s00215g274 is involved in specific regional ketone reductions at C-4 of farnesyl epoxy-quinone. The pathway begins with the biosynthesis of 6-methylsalicylic acid (6-MSA), the first precursor of the polyketide-derived epoxycyclohexenol in arthrosporols, by the polyketide synthase (PKS) AOL_s00215g283 via condensation of 1 acetate and 3 malonate units. The 6-methylsalicylic acid decarboxylase AOL_s00215g281 then catalyzes the decarboxylation of 6-methylsalicylic acid to yield m-cresol. The cytochrome P450 monooxygenase AOL_s00215g282 further oxidizes m-cresol to yield toluquinol. With the assistance of the oxidoreductase AOL_s00215g277, the polyprenyl transferase AOL_s00215g276 catalyzes the farnesylation of toluquinol to produce farnesyl hydroquinone, the hybrid precursor for biosynthesis of SECs. Farnesyl hydroquinone undergoes epoxidation and then subsequent dehydrogenation to form farnesyl epoxy-quinone, the first and simplest SEC. The cytochrome P450 monooxygenase AOL_s00215g278 and the FAD-dependent monooxygenase AOL_s00215g279 might be involved in the oxygenation of the phenol moiety, most likely in the epoxy formation. The cytochrome P450 monooxygenases AOL_s00215g274 and AOL_s00215g280 are involved in specific regional ketone reductions at respectively C-4 and C-1 of farnesyl epoxy-quinone PubMed:33823587. The protein is Short chain dehydrogenase AOL_s00215g274 of Arthrobotrys oligospora (strain ATCC 24927 / CBS 115.81 / DSM 1491) (Nematode-trapping fungus).